A 208-amino-acid chain; its full sequence is CKLF-like MARVEL transmembrane domain-containing protein 4 (208 aa).

Acidic residues predominate over residues 1–11 (MRGGEELDGFE). Residues 1–38 (MRGGEELDGFEGEASSTSMISGASSPYQPTTEPVSQRR) are disordered. Residues 15–25 (SSTSMISGASS) are compositionally biased toward low complexity. Positions 49–176 (YLRGALGRLK…STFLAMQKWR (128 aa)) constitute an MARVEL domain. Helical transmembrane passes span 59–79 (VAQVILALIAFICIETIMECS), 85–105 (YFFEFVSCSAFVVTGVLLILF), 123–143 (LVNTGLSTFFFFIASIVLAAL), and 151–171 (IAAVIFGFLATAAYAVSTFLA). At serine 194 the chain carries Phosphoserine.

Belongs to the chemokine-like factor family. Interacts with PD1L1 and CMTM6.

The protein resides in the membrane. Its function is as follows. Acts as a backup for CMTM6 to regulate plasma membrane expression of PD-L1/CD274, an immune inhibitory ligand critical for immune tolerance to self and antitumor immunity. May protect PD-L1/CD274 from being polyubiquitinated and targeted for degradation. In Mus musculus (Mouse), this protein is CKLF-like MARVEL transmembrane domain-containing protein 4.